The primary structure comprises 247 residues: Retbindin (247 aa).

The first 31 residues, 1–31 (MAHEGHSQHSGLVWALRPILAWIFLVACGWS), serve as a signal peptide directing secretion. Intrachain disulfides connect C99-C169, C106-C146, C139-C183, and C152-C165.

The protein belongs to the folate receptor family. In terms of processing, not N-glycosylated. In terms of tissue distribution, expressed in the peripheral retina where it localizes to the inter-photoreceptor matrix (at protein level). May be produced by rod photoreceptors (at protein level).

It is found in the secreted. The protein localises to the extracellular space. The protein resides in the extracellular matrix. It localises to the interphotoreceptor matrix. Its subcellular location is the cell membrane. In terms of biological role, riboflavin-binding protein which might have a role in retinal flavin transport. In Mus musculus (Mouse), this protein is Retbindin (Rtbdn).